Here is a 241-residue protein sequence, read N- to C-terminus: U2 small nuclear ribonucleoprotein B'' (241 aa).

In terms of domain architecture, RRM 1 spans 12-91; the sequence is QTLYVNNLYE…RPMKIQYCKS (80 aa). A compositionally biased stretch (basic and acidic residues) spans 99-126; that stretch reads LDGTYMEKKREREENDKKGSNKKQDRKS. Residues 99 to 169 form a disordered region; it reads LDGTYMEKKR…PRDDPPNKTL (71 aa). Residues 129–152 are compositionally biased toward low complexity; sequence QQQQQQKRPGAPTSTTSTTSPTTS. An RRM 2 domain is found at 167–241; it reads KTLFVENLPD…KPMVVSFAAQ (75 aa).

This sequence belongs to the RRM U1 A/B'' family. As to quaternary structure, identified in the spliceosome B complex. Identified in the spliceosome C complex.

Its subcellular location is the nucleus. Functionally, involved in pre-mRNA splicing as component of the spliceosome. Associated with sn-RNP U2, where it contributes to the binding of stem loop IV of U2 snRNA. The chain is U2 small nuclear ribonucleoprotein B'' (snrpb2) from Dictyostelium discoideum (Social amoeba).